Reading from the N-terminus, the 179-residue chain is GTP-dependent dephospho-CoA kinase (179 aa).

GTP is bound by residues Asp-55, Val-57, Asp-74, Lys-76, and Glu-128.

It belongs to the GTP-dependent DPCK family.

It catalyses the reaction 3'-dephospho-CoA + GTP = GDP + CoA + H(+). The protein operates within cofactor biosynthesis; coenzyme A biosynthesis. Catalyzes the GTP-dependent phosphorylation of the 3'-hydroxyl group of dephosphocoenzyme A to form coenzyme A (CoA). The protein is GTP-dependent dephospho-CoA kinase of Saccharolobus solfataricus (strain ATCC 35092 / DSM 1617 / JCM 11322 / P2) (Sulfolobus solfataricus).